An 81-amino-acid polypeptide reads, in one-letter code: Three-finger toxin A1 (81 aa).

Positions 1–21 are cleaved as a signal peptide; that stretch reads MKTLLLTLVVVTIVCLDFGHT. 4 disulfide bridges follow: cysteine 24–cysteine 43, cysteine 38–cysteine 60, cysteine 62–cysteine 73, and cysteine 74–cysteine 79.

It belongs to the three-finger toxin family. Short-chain subfamily. Type I alpha-neurotoxin sub-subfamily. As to expression, expressed by the venom gland.

It is found in the secreted. Its function is as follows. Binds and inhibits fetal (alpha-1-beta-1-gamma-delta/CHRNA1-CHRNB1-CHRNG-CHRND, IC(50)=1.4 nM), adult (alpha-1-beta-1-delta-epsilon/CHRNA1-CHRNB1-CHRND-CHRNE, IC(50)=12 nM) and neuronal alpha-7/CHRNA7 (IC(50)=400 nM) nicotinic acetylcholine receptors (nAChR) thereby impairing neuromuscular and neuronal transmissions. The polypeptide is Three-finger toxin A1 (Micrurus laticollaris (Balsas coral snake)).